We begin with the raw amino-acid sequence, 500 residues long: Pentatricopeptide repeat-containing protein At1g06580 (500 aa).

PPR repeat units follow at residues 78–112 (SIVD…GISH), 113–147 (DLYS…GFEP), 148–182 (SIVT…GYEP), 183–217 (NVVI…GIRP), 218–252 (DVVT…GISP), 253–287 (DVIT…SVNP), 288–322 (NIVT…GFFP), 323–357 (NAVT…GVDG), 358–392 (DTFT…GVHP), 393–427 (DMYT…KTVV), 428–462 (GIIT…GVSP), and 463–498 (DVIT…GLMP).

It belongs to the PPR family. P subfamily.

The polypeptide is Pentatricopeptide repeat-containing protein At1g06580 (Arabidopsis thaliana (Mouse-ear cress)).